Here is a 688-residue protein sequence, read N- to C-terminus: Zinc finger and BTB domain-containing protein 48 (688 aa).

A BTB domain is found at 26–89; it reads CDATLDVGGL…FYTGHLALTS (64 aa). The interval 119-140 is disordered; it reads SVGQAAGGQSGLGPPASQNVNS. A Glycyl lysine isopeptide (Lys-Gly) (interchain with G-Cter in SUMO2) cross-link involves residue Lys-143. The disordered stretch occupies residues 161-192; sequence PRDQEPRGSHSPQRPQLHSPAQSEGPSSLCGK. Phosphoserine is present on residues Ser-169, Ser-171, and Ser-179. Residues 170–186 are compositionally biased toward polar residues; sequence HSPQRPQLHSPAQSEGP. Lys-263 is covalently cross-linked (Glycyl lysine isopeptide (Lys-Gly) (interchain with G-Cter in SUMO2)). Residues 291 to 313 form a C2H2-type 1 zinc finger; the sequence is VECPTCHKKFLSKYYLKVHNRKH. Residues Cys-293, Cys-296, His-309, His-313, Cys-321, Cys-324, His-337, Cys-342, Cys-352, Cys-355, His-368, His-372, Cys-380, Cys-383, His-396, and His-401 each contribute to the Zn(2+) site. A CCHC-type zinc finger spans residues 319–344; sequence FECPKCGKCYFRKENLLEHEARNCMN. 9 C2H2-type zinc fingers span residues 350 to 372, 378 to 401, 407 to 430, 436 to 459, 465 to 487, 493 to 515, 521 to 544, 550 to 572, and 578 to 600; these read FTCSVCQETFRRRMELRVHMVSH, YKCSSCSQQFMQKKDLQSHMIKLH, HACPTCAKCFLSRTELQLHEAFKH, FVCEECGHRASSRNGLQMHIKAKH, HVCEFCSHAFTQKANLNMHLRTH, FQCHLCGKTFRTQASLDKHNRTH, FSCEFCEQRFTEKGPLLRHVASRH, HFCQICGKTFKAVEQLRVHVRRH, and FECTECGYKFTRQAHLRRHMEIH. The Zn(2+) site is built by Cys-552, Cys-555, His-568, Cys-580, Cys-583, His-596, and His-600.

The protein belongs to the krueppel C2H2-type zinc-finger protein family. Interacts with EP300. In terms of tissue distribution, detected in adrenal gland and neuroblastoma.

It localises to the nucleus. The protein localises to the chromosome. The protein resides in the telomere. Functionally, plays a critical role in transcriptional regulation and chromatin remodeling. Acts as a regulator of telomere length. Directly binds the telomeric double-stranded 5'-TTAGGG-3' repeat. Preferentially binds to telomeres that have a low concentration of shelterin complex and acts as a regulator of telomere length by initiating telomere trimming, a process that prevents the accumulation of aberrantly long telomeres. Also acts as a transcription regulator that binds to promoter regions. Regulates expression of a small subset of genes, including MTFP1. Acts as a negative regulator of cell proliferation by specifically activating expression of ARF, a tumor suppressor isoform of CDKN2A. Acts as a transcription regulator of CIITA, the major factor regulating MHC class II gene expression. In addition, regulates cellular m6A/m6Am methylation on RNA by facilitating the recruitment of the RNA demethylase, FTO, to target mRNAs. In Homo sapiens (Human), this protein is Zinc finger and BTB domain-containing protein 48.